A 210-amino-acid chain; its full sequence is Kinetochore protein Spc25 (210 aa).

Residues 42-106 (TMENIKRQQH…KKKQERDKLI (65 aa)) are a coiled coil.

This sequence belongs to the SPC25 family. As to quaternary structure, component of the Ndc80 complex, which is composed of Ndc80, Nuf2 and Spc25.

It is found in the nucleus. The protein resides in the chromosome. It localises to the centromere. Its subcellular location is the kinetochore. Its function is as follows. Acts as a component of the essential kinetochore-associated Ndc80 complex, which is required for chromosome segregation and spindle checkpoint activity during meiosis and mitosis. Required for kinetochore integrity and the organization of stable microtubule binding sites in the outer plate of the kinetochore. Participates in SAC signaling that responds specifically to disruptions in spindle microtubule dynamics. The NDC80 complex synergistically enhances the affinity of the SKA1 complex for microtubules and may allow the NDC80 complex to track depolymerizing microtubules. This chain is Kinetochore protein Spc25, found in Drosophila virilis (Fruit fly).